The sequence spans 397 residues: Chorismate synthase (397 aa).

Positions 40 and 46 each coordinate NADP(+). FMN is bound by residues 129–131 (RAS), 257–258 (QA), Gly302, 317–321 (KPIAT), and Arg343.

The protein belongs to the chorismate synthase family. Homotetramer. It depends on FMNH2 as a cofactor.

It carries out the reaction 5-O-(1-carboxyvinyl)-3-phosphoshikimate = chorismate + phosphate. The protein operates within metabolic intermediate biosynthesis; chorismate biosynthesis; chorismate from D-erythrose 4-phosphate and phosphoenolpyruvate: step 7/7. Catalyzes the anti-1,4-elimination of the C-3 phosphate and the C-6 proR hydrogen from 5-enolpyruvylshikimate-3-phosphate (EPSP) to yield chorismate, which is the branch point compound that serves as the starting substrate for the three terminal pathways of aromatic amino acid biosynthesis. This reaction introduces a second double bond into the aromatic ring system. The protein is Chorismate synthase of Chlorobium phaeobacteroides (strain BS1).